The chain runs to 329 residues: GTPase Obg (329 aa).

Positions 1–159 constitute an Obg domain; that stretch reads MQFIDQARIT…WPLQLELKLL (159 aa). The OBG-type G domain occupies 160–328; that stretch reads AEVGIIGLPN…LLAETWVELG (169 aa). Residues 166–173, 191–195, 213–216, 280–283, and 309–311 each bind ATP; these read GLPNAGKS, FTTLV, DIPG, NKQE, and SAA. Mg(2+) contacts are provided by Ser-173 and Thr-193.

Belongs to the TRAFAC class OBG-HflX-like GTPase superfamily. OBG GTPase family. In terms of assembly, monomer. It depends on Mg(2+) as a cofactor.

It is found in the cytoplasm. In terms of biological role, an essential GTPase which binds GTP, GDP and possibly (p)ppGpp with moderate affinity, with high nucleotide exchange rates and a fairly low GTP hydrolysis rate. Plays a role in control of the cell cycle, stress response, ribosome biogenesis and in those bacteria that undergo differentiation, in morphogenesis control. This is GTPase Obg from Synechococcus sp. (strain CC9605).